The sequence spans 890 residues: Translation initiation factor IF-2 (890 aa).

Positions 45-303 (LIDHLNQKNS…SLQQGFQKPA (259 aa)) are disordered. The span at 67–81 (STLNIPGTGGKSKSV) shows a compositional bias: polar residues. Residues 92–217 (VKRDPQEAER…RMAEENKWTD (126 aa)) show a composition bias toward basic and acidic residues. Positions 252–266 (GRGRNAKAARPKKGN) are enriched in basic residues. The segment covering 267–280 (KHAESKADREEARA) has biased composition (basic and acidic residues). A tr-type G domain is found at 389-558 (PRAPVVTIMG…LLQAEVLELK (170 aa)). The segment at 398-405 (GHVDHGKT) is G1. 398–405 (GHVDHGKT) contributes to the GTP binding site. The G2 stretch occupies residues 423–427 (GITQH). The segment at 444-447 (DTPG) is G3. GTP-binding positions include 444-448 (DTPGH) and 498-501 (NKID). Residues 498–501 (NKID) are G4. A G5 region spans residues 534–536 (SAK). K808 is subject to N6-acetyllysine.

It belongs to the TRAFAC class translation factor GTPase superfamily. Classic translation factor GTPase family. IF-2 subfamily.

The protein resides in the cytoplasm. Its function is as follows. One of the essential components for the initiation of protein synthesis. Protects formylmethionyl-tRNA from spontaneous hydrolysis and promotes its binding to the 30S ribosomal subunits. Also involved in the hydrolysis of GTP during the formation of the 70S ribosomal complex. This Shigella boydii serotype 18 (strain CDC 3083-94 / BS512) protein is Translation initiation factor IF-2.